The primary structure comprises 188 residues: Putative 3-methyladenine DNA glycosylase (188 aa).

Belongs to the DNA glycosylase MPG family.

This Ehrlichia ruminantium (strain Welgevonden) protein is Putative 3-methyladenine DNA glycosylase.